The primary structure comprises 87 residues: U3-theraphotoxin-Hhn1n (87 aa).

Residues 1-24 (MVNMKASMFLTFAGLVLLFVVCYA) form the signal peptide. Positions 25-52 (SESEEKEFPKEMLSSIFAVDNDFKQEER) are excised as a propeptide. 3 disulfides stabilise this stretch: Cys-54–Cys-67, Cys-61–Cys-72, and Cys-66–Cys-79.

Belongs to the neurotoxin 10 (Hwtx-1) family. 51 (Hntx-8) subfamily. Hntx-8 sub-subfamily. Expressed by the venom gland.

The protein localises to the secreted. Functionally, weakly inhibits Kv11.1/KCNH2/ERG1, Kv1.2/KCNA2, Kv1.3/KCNA3, and Kv2.1/KCNB1. This is U3-theraphotoxin-Hhn1n from Cyriopagopus hainanus (Chinese bird spider).